The chain runs to 197 residues: Phospholipid hydroperoxide glutathione peroxidase (197 aa).

Ser40 bears the Phosphoserine mark. Sec73 is an active-site residue. Sec73 is a non-standard amino acid (selenocysteine).

The protein belongs to the glutathione peroxidase family. In terms of assembly, monomer. Has a tendency to form higher mass oligomers. Interacts with FUNDC1; this interaction promotes GPX4 recruitment into mitochondria through TOM/TIM complex where it is degraded by mitophagy.

It is found in the mitochondrion. The protein resides in the cytoplasm. The enzyme catalyses a hydroperoxy polyunsaturated fatty acid + 2 glutathione = a hydroxy polyunsaturated fatty acid + glutathione disulfide + H2O. It catalyses the reaction 2 glutathione + H2O2 = glutathione disulfide + 2 H2O. The catalysed reaction is tert-butyl hydroperoxide + 2 glutathione = tert-butanol + glutathione disulfide + H2O. It carries out the reaction cumene hydroperoxide + 2 glutathione = 2-phenylpropan-2-ol + glutathione disulfide + H2O. The enzyme catalyses (9S)-hydroperoxy-(10E,12Z)-octadecadienoate + 2 glutathione = (9S)-hydroxy-(10E,12Z)-octadecadienoate + glutathione disulfide + H2O. It catalyses the reaction (13S)-hydroperoxy-(9Z,11E)-octadecadienoate + 2 glutathione = (13S)-hydroxy-(9Z,11E)-octadecadienoate + glutathione disulfide + H2O. The catalysed reaction is (5S)-hydroperoxy-(6E,8Z,11Z,14Z)-eicosatetraenoate + 2 glutathione = (5S)-hydroxy-(6E,8Z,11Z,14Z)-eicosatetraenoate + glutathione disulfide + H2O. It carries out the reaction (12R)-hydroperoxy-(5Z,8Z,10E,14Z)-eicosatetraenoate + 2 glutathione = (12R)-hydroxy-(5Z,8Z,10E,14Z)-eicosatetraenoate + glutathione disulfide + H2O. The enzyme catalyses (12S)-hydroperoxy-(5Z,8Z,10E,14Z)-eicosatetraenoate + 2 glutathione = (12S)-hydroxy-(5Z,8Z,10E,14Z)-eicosatetraenoate + glutathione disulfide + H2O. It catalyses the reaction (15S)-hydroperoxy-(5Z,8Z,11Z,13E)-eicosatetraenoate + 2 glutathione = (15S)-hydroxy-(5Z,8Z,11Z,13E)-eicosatetraenoate + glutathione disulfide + H2O. The catalysed reaction is (5S)-hydroperoxy-(6E,8Z,11Z,14Z,17Z)-eicosapentaenoate + 2 glutathione = (5S)-hydroxy-(6E,8Z,11Z,14Z,17Z)-eicosapentaenoate + glutathione disulfide + H2O. It carries out the reaction (12S)-hydroperoxy-(5Z,8Z,10E,14Z,17Z)-eicosapentaenoate + 2 glutathione = (12S)-hydroxy-(5Z,8Z,10E,14Z,17Z)-eicosapentaenoate + glutathione disulfide + H2O. The enzyme catalyses (15S)-hydroperoxy-(5Z,8Z,11Z,13E,17Z)-eicosapentaenoate + 2 glutathione = (15S)-hydroxy-(5Z,8Z,11Z,13E,17Z)-eicosapentaenoate + glutathione disulfide + H2O. It catalyses the reaction (15S)-hydroperoxy-(11Z,13E)-eicosadienoate + 2 glutathione = (15S)-hydroxy-(11Z,13E)-eicosadienoate + glutathione disulfide + H2O. The catalysed reaction is (17S)-hydroperoxy-(4Z,7Z,10Z,13Z,15E,19Z)-docosahexaenoate + 2 glutathione = (17S)-hydroxy-(4Z,7Z,10Z,13Z,15E,19Z)-docosahexaenoate + glutathione disulfide + H2O. It carries out the reaction a hydroperoxy-1,2-diacyl-glycero-3-phosphocholine + 2 glutathione = a hydroxy-1,2-diacyl-glycero-3-phosphocholine + glutathione disulfide + H2O. In terms of biological role, essential antioxidant peroxidase that directly reduces phospholipid hydroperoxide even if they are incorporated in membranes and lipoproteins. Can also reduce fatty acid hydroperoxide, cholesterol hydroperoxide and thymine hydroperoxide. Plays a key role in protecting cells from oxidative damage by preventing membrane lipid peroxidation. Required to prevent cells from ferroptosis, a non-apoptotic cell death resulting from an iron-dependent accumulation of lipid reactive oxygen species. The presence of selenocysteine (Sec) versus Cys at the active site is essential for life: it provides resistance to overoxidation and prevents cells against ferroptosis. The presence of Sec at the active site is also essential for the survival of a specific type of parvalbumin-positive interneurons, thereby preventing against fatal epileptic seizures. May be required to protect cells from the toxicity of ingested lipid hydroperoxides. Required for normal sperm development and male fertility. Essential for maturation and survival of photoreceptor cells. Plays a role in a primary T-cell response to viral and parasitic infection by protecting T-cells from ferroptosis and by supporting T-cell expansion. Plays a role of glutathione peroxidase in platelets in the arachidonic acid metabolism. Reduces hydroperoxy ester lipids formed by a 15-lipoxygenase that may play a role as down-regulator of the cellular 15-lipoxygenase pathway. Can also reduce small soluble hydroperoxides such as H2O2, cumene hydroperoxide and tert-butyl hydroperoxide. This is Phospholipid hydroperoxide glutathione peroxidase from Sus scrofa (Pig).